A 97-amino-acid polypeptide reads, in one-letter code: Large ribosomal subunit protein eL37 (97 aa).

Lys10 bears the N6-acetyllysine mark. Residues Cys19, Cys22, Cys34, and Cys37 each contribute to the Zn(2+) site. A C4-type zinc finger spans residues 19-37 (CRRCGSKAYHLQKSTCGKC). Residues Ser96 and Ser97 each carry the phosphoserine modification.

It belongs to the eukaryotic ribosomal protein eL37 family. As to quaternary structure, component of the large ribosomal subunit.

Its subcellular location is the cytoplasm. Functionally, component of the large ribosomal subunit. The ribosome is a large ribonucleoprotein complex responsible for the synthesis of proteins in the cell. The chain is Large ribosomal subunit protein eL37 (RPL37) from Bos taurus (Bovine).